We begin with the raw amino-acid sequence, 431 residues long: RNA-binding motif, single-stranded-interacting protein 3 (431 aa).

The disordered stretch occupies residues 28–53; that stretch reads YAPAPHPMAPPSPSTNSSSNSSGEQL. The span at 31–40 shows a compositional bias: pro residues; it reads APHPMAPPSP. RRM domains follow at residues 56-129 and 135-220; these read TNLY…MAKQ and TNLY…FADG. Disordered regions lie at residues 220–242 and 393–431; these read GGQK…PREG and TSPQ…QSKP. Residues 401-411 show a composition bias toward low complexity; it reads SSQDSSGQQQQ.

It is found in the cytoplasm. In terms of biological role, binds poly(A) and poly(U) oligoribonucleotides. This chain is RNA-binding motif, single-stranded-interacting protein 3 (Rbms3), found in Mus musculus (Mouse).